Consider the following 224-residue polypeptide: Proteasome subunit beta (224 aa).

The propeptide at 1 to 6 (MDVMKG) is removed in mature form; by autocatalysis. The active-site Nucleophile is Thr-7.

The protein belongs to the peptidase T1B family. In terms of assembly, the 20S proteasome core is composed of 14 alpha and 14 beta subunits that assemble into four stacked heptameric rings, resulting in a barrel-shaped structure. The two inner rings, each composed of seven catalytic beta subunits, are sandwiched by two outer rings, each composed of seven alpha subunits. The catalytic chamber with the active sites is on the inside of the barrel. Has a gated structure, the ends of the cylinder being occluded by the N-termini of the alpha-subunits. Is capped at one or both ends by the proteasome regulatory ATPase, PAN.

The protein localises to the cytoplasm. It catalyses the reaction Cleavage of peptide bonds with very broad specificity.. Its activity is regulated as follows. The formation of the proteasomal ATPase PAN-20S proteasome complex, via the docking of the C-termini of PAN into the intersubunit pockets in the alpha-rings, triggers opening of the gate for substrate entry. Interconversion between the open-gate and close-gate conformations leads to a dynamic regulation of the 20S proteasome proteolysis activity. In terms of biological role, component of the proteasome core, a large protease complex with broad specificity involved in protein degradation. The M.jannaschii proteasome is able to cleave oligopeptides after Glu, Asp, Tyr, Phe, Trp, slightly after Arg, but not after Ala. Thus, displays caspase-like and chymotrypsin-like activities and low level of trypsin-like activity. This Methanocaldococcus jannaschii (strain ATCC 43067 / DSM 2661 / JAL-1 / JCM 10045 / NBRC 100440) (Methanococcus jannaschii) protein is Proteasome subunit beta.